The following is a 638-amino-acid chain: Gamma-aminobutyric acid receptor subunit theta (638 aa).

The first 21 residues, 1–21 (MGIRGMLRAAALLLLIRTWLA), serve as a signal peptide directing secretion. Over 22–267 (ESNGPSPTPK…FQVQREVRSY (246 aa)) the chain is Extracellular. Asn127 carries N-linked (GlcNAc...) asparagine glycosylation. Cys183 and Cys197 are joined by a disulfide. The chain crosses the membrane as a helical span at residues 268–288 (LVQVYWPTVLTTILSWISFWM). Over 289–296 (NYDSSAAR) the chain is Cytoplasmic. Residues 297 to 314 (VTIGLTSILVLTTIDSHM) form a helical membrane-spanning segment. Topologically, residues 315-325 (RDKLPHISCIK) are extracellular. A helical membrane pass occupies residues 326 to 346 (AIDIYILVCLFFVFLSLLEYV). At 347-617 (YINYLFFSQV…NRVPKVDRWS (271 aa)) the chain is on the cytoplasmic side. The interval 491–515 (ACDDEDSEESLSSEESHGHGSSHTG) is disordered. The segment covering 492 to 502 (CDDEDSEESLS) has biased composition (acidic residues). The chain crosses the membrane as a helical span at residues 618–638 (RFLFPLSFGLFNVVYWLYHVY).

The protein belongs to the ligand-gated ion channel (TC 1.A.9) family. Gamma-aminobutyric acid receptor (TC 1.A.9.5) subfamily. GABRQ sub-subfamily. As to quaternary structure, heteropentamer, formed by a combination of alpha (GABRA1-6), beta (GABRB1-3), gamma (GABRG1-3), delta (GABRD), epsilon (GABRE), rho (GABRR1-3), pi (GABRP) and theta (GABRQ) chains, each subunit exhibiting distinct physiological and pharmacological properties. In terms of tissue distribution, expressed in brain, lung, and spleen.

The protein localises to the postsynaptic cell membrane. The protein resides in the cell membrane. It carries out the reaction chloride(in) = chloride(out). Its activity is regulated as follows. Potentiated by etomidate, propofol, pregnanolone and pentobarbital. Its function is as follows. Theta subunit of the heteropentameric ligand-gated chloride channel gated by gamma-aminobutyric acid (GABA), a major inhibitory neurotransmitter in the brain. GABA-gated chloride channels, also named GABA(A) receptors (GABAAR), consist of five subunits arranged around a central pore and contain GABA active binding site(s) located at the alpha and beta subunit interfaces. When activated by GABA, GABAARs selectively allow the flow of chloride anions across the cell membrane down their electrochemical gradient. The sequence is that of Gamma-aminobutyric acid receptor subunit theta from Mus musculus (Mouse).